Reading from the N-terminus, the 468-residue chain is V-type proton ATPase subunit S1 (468 aa).

A signal peptide spans 1 to 35; that stretch reads MMAATAAAQVRAGTRWAPALCRMPWLPLMLVAAAA. Residues 36 to 228 constitute a propeptide that is removed on maturation; that stretch reads ATSEQQVPLV…TAVRPSRVAR (193 aa). The Lumenal portion of the chain corresponds to 36 to 417; that stretch reads ATSEQQVPLV…KKFSYASDCA (382 aa). Residues Asn167, Asn258, Asn271, Asn294, Asn301, Asn348, Asn355, and Asn404 are each glycosylated (N-linked (GlcNAc...) asparagine). A disulfide bridge connects residues Cys369 and Cys416. The helical transmembrane segment at 418–438 threads the bilayer; that stretch reads GFFSPGIWMGLLTSLFMLFIF. At 439–468 the chain is on the cytoplasmic side; it reads TYGLHMILSLKTMDRFDDHKGPTITLTQIV.

Belongs to the vacuolar ATPase subunit S1 family. Accessory component of the multisubunit proton-transporting vacuolar (V)-ATPase protein pump. Interacts (via N-terminus) with ATP6AP2 (via N-terminus). Interacts with RNASEK. Interacts with TMEM106B (via C-terminus). Post-translationally, N-glycosylated.

The protein resides in the endoplasmic reticulum membrane. It localises to the endoplasmic reticulum-Golgi intermediate compartment membrane. The protein localises to the cytoplasmic vesicle. It is found in the secretory vesicle. Its subcellular location is the synaptic vesicle membrane. The protein resides in the clathrin-coated vesicle membrane. Its function is as follows. Accessory subunit of the proton-transporting vacuolar (V)-ATPase protein pump, which is required for luminal acidification of secretory vesicles. Guides the V-type ATPase into specialized subcellular compartments, such as neuroendocrine regulated secretory vesicles or the ruffled border of the osteoclast, thereby regulating its activity. Involved in membrane trafficking and Ca(2+)-dependent membrane fusion. May play a role in the assembly of the V-type ATPase complex. In aerobic conditions, involved in intracellular iron homeostasis, thus triggering the activity of Fe(2+) prolyl hydroxylase (PHD) enzymes, and leading to HIF1A hydroxylation and subsequent proteasomal degradation. In islets of Langerhans cells, may regulate the acidification of dense-core secretory granules. The chain is V-type proton ATPase subunit S1 (ATP6AP1) from Bos taurus (Bovine).